Consider the following 958-residue polypeptide: Dermatan-sulfate epimerase (958 aa).

An N-terminal signal peptide occupies residues 1–22 (MRTHTRGAPSVFFIYLLCFVSA). Residues 23-902 (YITDENPEVM…APSLSASYTR (880 aa)) are Lumenal-facing. The N-linked (GlcNAc...) (complex) asparagine glycan is linked to Asn-183. His-205 (proton donor) is an active-site residue. The active site involves Tyr-261. N-linked (GlcNAc...) (high mannose) asparagine glycosylation is present at Asn-336. The N-linked (GlcNAc...) (complex) asparagine glycan is linked to Asn-411. Positions 452 and 470 each coordinate Mn(2+). Tyr-473 is an active-site residue. Position 481 (Asn-481) interacts with Mn(2+). Asn-642 carries N-linked (GlcNAc...) (complex) asparagine glycosylation. Asn-648 carries N-linked (GlcNAc...) (paucimannose) asparagine glycosylation. The helical transmembrane segment at 903-923 (LFLILNIAIFFVMLAMQLTYF) threads the bilayer. Over 924 to 933 (QRAQSLHGQR) the chain is Cytoplasmic. A helical membrane pass occupies residues 934–954 (CLYAVLLIDSCILLWLYSSCS). Residues 955–958 (QSQC) are Lumenal-facing.

This sequence belongs to the dermatan-sulfate isomerase family. Mn(2+) serves as cofactor. Post-translationally, N-glycosylated. Glycosylation is important for enzymatic activity. As to expression, ubiquitously expressed with higher expression in kidney and ovary and lower expression in brain, colon and thymus. Also expressed in renal cell carcinomas, brain tumors, and in a part of melanomas and adenocarcinomas from organs other than the breast. Expressed in squamous cell carcinomas (SCC), glioma, and some adenocarcinoma cell lines, but not in breast cancer cell lines or any normal tissues (at protein level).

Its subcellular location is the endoplasmic reticulum membrane. The protein localises to the golgi apparatus membrane. It is found in the cytoplasmic vesicle membrane. It localises to the microsome membrane. The enzyme catalyses chondroitin 4'-sulfate = dermatan 4'-sulfate. The protein operates within glycan metabolism; chondroitin sulfate biosynthesis. It participates in glycan metabolism; heparan sulfate biosynthesis. In terms of biological role, converts D-glucuronic acid to L-iduronic acid (IdoUA) residues. Plays an important role in the biosynthesis of the glycosaminoglycan/mucopolysaccharide dermatan sulfate. This is Dermatan-sulfate epimerase (DSE) from Homo sapiens (Human).